The following is a 438-amino-acid chain: L-fucose-proton symporter (438 aa).

The Cytoplasmic segment spans residues 2 to 26 (GNTSIQTQSYRAVDKDAGQSRSYII). The chain crosses the membrane as a helical span at residues 27 to 53 (PFALLCSLFFLWAVANNLNDILLPQFQ). Residues 54–61 (QAFTLTNF) are Periplasmic-facing. Residues 62–87 (QAGLIQSAFYFGYFIIPIPAGILMKK) form a helical membrane-spanning segment. Residues 88 to 90 (LSY) lie on the Cytoplasmic side of the membrane. Residues 91-113 (KAGIITGLFLYALGAALFWPAAE) traverse the membrane as a helical segment. The Periplasmic segment spans residues 114–117 (IMNY). The chain crosses the membrane as a helical span at residues 118-144 (TLFLVGLFIIAAGLGCLETAANPFVTV). Residues 145–150 (LGPESS) are Cytoplasmic-facing. A helical transmembrane segment spans residues 151–178 (GHFRLNLAQTFNSFGAIIAVVFGQSLIL). Residues 179–193 (SNVPHQSQDVLDKMS) are Periplasmic-facing. A helical transmembrane segment spans residues 194-227 (PEQLSAYKHSLVLSVQTPYMIIVAIVLLVALLIM). The Cytoplasmic portion of the chain corresponds to 228–257 (LTKFPALQSDNHSDAKQGSFSASLSRLARI). A helical membrane pass occupies residues 258 to 287 (RHWRWAVLAQFCYVGAQTACWSYLIRYAVE). Topologically, residues 288-293 (EIPGMT) are periplasmic. Residues 294–319 (AGFAANYLTGTMVCFFIGRFTGTWLI) traverse the membrane as a helical segment. Residues 320 to 324 (SRFAP) lie on the Cytoplasmic side of the membrane. The helical transmembrane segment at 325–343 (HKVLAAYALIAMALCLISA) threads the bilayer. Over 344–347 (FAGG) the chain is Periplasmic. A helical membrane pass occupies residues 348–372 (HVGLIALTLCSAFMSIQYPTIFSLG). At 373-379 (IKNLGQD) the chain is on the cytoplasmic side. Residues 380-407 (TKYGSSFIVMTIIGGGIVTPVMGFVSDA) form a helical membrane-spanning segment. Topologically, residues 408–410 (AGN) are periplasmic. A helical membrane pass occupies residues 411–430 (IPTAELIPALCFAVIFIFAR). The Cytoplasmic portion of the chain corresponds to 431–438 (FRSQTATN).

Belongs to the major facilitator superfamily. FHS transporter (TC 2.A.1.7) family.

It is found in the cell inner membrane. It catalyses the reaction L-fucose(in) + H(+)(in) = L-fucose(out) + H(+)(out). The catalysed reaction is D-arabinose(out) + H(+)(out) = D-arabinose(in) + H(+)(in). The enzyme catalyses L-galactose(out) + H(+)(out) = L-galactose(in) + H(+)(in). Functionally, mediates the uptake of L-fucose across the boundary membrane with the concomitant transport of protons into the cell (symport system). Can also transport L-galactose and D-arabinose, but at reduced rates compared with L-fucose. Is not able to transport L-rhamnose and L-arabinose. Binds D-arabinose with the highest affinity, followed by L-fucose, and then by L-galactose. The chain is L-fucose-proton symporter (fucP) from Escherichia coli (strain K12).